A 290-amino-acid chain; its full sequence is Glutamate racemase (290 aa).

Residues 24–25 and 56–57 each bind substrate; these read DS and YG. Cys-87 acts as the Proton donor/acceptor in catalysis. Residue 88–89 coordinates substrate; the sequence is NT. Catalysis depends on Cys-199, which acts as the Proton donor/acceptor. Position 200-201 (200-201) interacts with substrate; sequence TH. The tract at residues 271-290 is disordered; it reads GADGASLPDPPSPRIELTTT.

Belongs to the aspartate/glutamate racemases family.

It catalyses the reaction L-glutamate = D-glutamate. Its pathway is cell wall biogenesis; peptidoglycan biosynthesis. Functionally, provides the (R)-glutamate required for cell wall biosynthesis. The sequence is that of Glutamate racemase from Deinococcus radiodurans (strain ATCC 13939 / DSM 20539 / JCM 16871 / CCUG 27074 / LMG 4051 / NBRC 15346 / NCIMB 9279 / VKM B-1422 / R1).